The chain runs to 233 residues: Large ribosomal subunit protein uL1 (233 aa).

It belongs to the universal ribosomal protein uL1 family. As to quaternary structure, part of the 50S ribosomal subunit.

In terms of biological role, binds directly to 23S rRNA. The L1 stalk is quite mobile in the ribosome, and is involved in E site tRNA release. Its function is as follows. Protein L1 is also a translational repressor protein, it controls the translation of the L11 operon by binding to its mRNA. This chain is Large ribosomal subunit protein uL1, found in Brucella anthropi (strain ATCC 49188 / DSM 6882 / CCUG 24695 / JCM 21032 / LMG 3331 / NBRC 15819 / NCTC 12168 / Alc 37) (Ochrobactrum anthropi).